Consider the following 414-residue polypeptide: Protein DNA-DAMAGE INDUCIBLE 1 (414 aa).

Residues 1 to 76 enclose the Ubiquitin-like domain; the sequence is MRITVMTAGE…LMMMVSNASS (76 aa). The region spanning 213–292 is the Peptidase A2 domain; sequence LKAFVDSGAQ…NMEFLFGLDM (80 aa). Residue D218 is part of the active site. Residues 332 to 374 form a disordered region; it reads ERVPNDASSSGATVPSGFTEKKNNTVANPTSQQPKRQNTSEGP. The span at 355–372 shows a compositional bias: polar residues; that stretch reads NTVANPTSQQPKRQNTSE. Residues 374–414 form the UBA domain; that stretch reads PEFEAKIAKLVELGFSRDSVIQALKLFEGNEEQAAGFLFGG.

It belongs to the DDI1 family. As to quaternary structure, homodimer.

Its subcellular location is the cytoplasm. The protein resides in the cytosol. Functionally, receptor of ubiquitinated protein targeted to ubiquitin/proteasome-mediated proteolysis (UPP). Relatively weak affinity for both 'Lys-48'- and 'Lys-63'-linked ubiquitin chains with a slight preference for 'Lys-48-'linked chains of three or more ubiquitin units. This chain is Protein DNA-DAMAGE INDUCIBLE 1, found in Arabidopsis thaliana (Mouse-ear cress).